The primary structure comprises 83 residues: Toxin BmKBT (83 aa).

The N-terminal stretch at Met-1 to Thr-19 is a signal peptide. An LCN-type CS-alpha/beta domain is found at Lys-21–Arg-81. Disulfide bonds link Cys-31–Cys-80, Cys-35–Cys-54, Cys-41–Cys-61, and Cys-45–Cys-63. Lys-83 is a propeptide (removed by a carboxypeptidase).

This sequence belongs to the long (4 C-C) scorpion toxin superfamily. Sodium channel inhibitor family. Beta subfamily. In terms of tissue distribution, expressed by the venom gland.

Its subcellular location is the secreted. Its function is as follows. This toxin increases the peak sodium current, slows down the inactivation of sodium channels (Nav), and prolongs the action potential of dorsal root ganglion neurons, which indicates that it behaves as a classical alpha-toxin. It binds to mammal brain and insect sodium channels, but with a different manner. This peptide may bind to a distinct receptor site on mammal brain sodium channels, which is unconnected with that for BmKAS (a beta-toxin), BmKIT2 (a beta-toxin) or BmK I (an alpha toxin). In contrast, the receptor site for BmKabT on insect sodium channels might be closely related to that for the beta-insect depressant toxin BmKIT2. Possesses potent toxicity in mice but induces only paralysis in cotton bollworm. The polypeptide is Toxin BmKBT (Olivierus martensii (Manchurian scorpion)).